Reading from the N-terminus, the 976-residue chain is Dibasic-processing endoprotease (976 aa).

The first 17 residues, 1-17 (MLRKFILGLLLASQAVA), serve as a signal peptide directing secretion. The N-linked (GlcNAc...) asparagine glycan is linked to N156. Over residues 172 to 212 (AEEAQKAQDDKGDKKEDQKDDKKEGQEAQKEGDKEDNKGDD) the composition is skewed to basic and acidic residues. A disordered region spans residues 172-246 (AEEAQKAQDD…VQWKPVDESM (75 aa)). Positions 213–231 (KEDGEEDDDDDEDEDDDDA) are enriched in acidic residues. The 319-residue stretch at 277 to 595 (QWYLHNVHKA…YGKLDASKIV (319 aa)) folds into the Peptidase S8 domain. N291 and N299 each carry an N-linked (GlcNAc...) asparagine glycan. The active-site Charge relay system is the D311. N-linked (GlcNAc...) asparagine glycosylation occurs at N336. Residues H349 and S528 each act as charge relay system in the active site. Residues 524–544 (HGGTSAAAPLAAGVFALALSV) traverse the membrane as a helical segment. Residues 604–737 (VNNQTSFHSE…QLNVFGEQKD (134 aa)) form the P/Homo B domain. N606 is a glycosylation site (N-linked (GlcNAc...) asparagine). The disordered stretch occupies residues 733-848 (GEQKDKREEN…SDSHTSWWPD (116 aa)). The segment covering 734-830 (EQKDKREENK…EEKPEEKPVD (97 aa)) has biased composition (basic and acidic residues). The helical transmembrane segment at 855–875 (AWLYGAVLLVGGFIAVIGIYA) threads the bilayer. An N-linked (GlcNAc...) asparagine glycan is attached at N886. The segment at 914–976 (PEDTHRRSGD…RDNDRQNLLG (63 aa)) is disordered. Composition is skewed to basic and acidic residues over residues 915 to 928 (EDTH…DRLY) and 940 to 976 (MFRI…NLLG).

This sequence belongs to the peptidase S8 family. Furin subfamily.

It localises to the membrane. This is Dibasic-processing endoprotease (XPR6) from Yarrowia lipolytica (strain CLIB 122 / E 150) (Yeast).